The primary structure comprises 870 residues: Valine--tRNA ligase (870 aa).

A 'HIGH' region motif is present at residues 42-52 (PNVTGVLHIGH). The 'KMSKS' region motif lies at 527–531 (KMSKS). ATP is bound at residue Lys-530. Residues 800–870 (LENVDLSGIL…ISVELQNLRG (71 aa)) are a coiled coil.

It belongs to the class-I aminoacyl-tRNA synthetase family. ValS type 1 subfamily. Monomer.

Its subcellular location is the cytoplasm. The enzyme catalyses tRNA(Val) + L-valine + ATP = L-valyl-tRNA(Val) + AMP + diphosphate. Catalyzes the attachment of valine to tRNA(Val). As ValRS can inadvertently accommodate and process structurally similar amino acids such as threonine, to avoid such errors, it has a 'posttransfer' editing activity that hydrolyzes mischarged Thr-tRNA(Val) in a tRNA-dependent manner. The chain is Valine--tRNA ligase from Campylobacter jejuni (strain RM1221).